A 334-amino-acid polypeptide reads, in one-letter code: 3-keto-steroid reductase/17-beta-hydroxysteroid dehydrogenase 7 (334 aa).

At 1 to 229 (MRKVVLITGA…VTCPGVVMTN (229 aa)) the chain is on the extracellular side. 8–15 (TGASSGIG) is an NAD(+) binding site. The N-linked (GlcNAc...) asparagine glycan is linked to Asn37. Ser171 lines the substrate pocket. An N-linked (GlcNAc...) asparagine glycan is attached at Asn178. Residue Tyr193 is the Proton acceptor of the active site. N-linked (GlcNAc...) asparagine glycosylation occurs at Asn229. The helical transmembrane segment at 230–250 (LTYGILPPFVWTLLLPVIWLL) threads the bilayer. Topologically, residues 251–334 (RFFAHAFTVT…ITIQKSDHHS (84 aa)) are cytoplasmic.

The protein belongs to the short-chain dehydrogenases/reductases (SDR) family. ERG27 subfamily. In terms of assembly, binds to the short form of prolactin receptor. Post-translationally, phosphorylated. As to expression, most abundant in ovaries of pregnant animals.

It is found in the endoplasmic reticulum membrane. The enzyme catalyses 17beta-estradiol + NADP(+) = estrone + NADPH + H(+). It catalyses the reaction a 3beta-hydroxysteroid + NADP(+) = a 3-oxosteroid + NADPH + H(+). It carries out the reaction 4alpha-methyl-5alpha-cholest-7-en-3beta-ol + NADP(+) = 4alpha-methyl-5alpha-cholest-7-en-3-one + NADPH + H(+). The catalysed reaction is 4alpha-methyl-5alpha-cholest-8-en-3-one + NADPH + H(+) = 4alpha-methyl-5alpha-cholest-8-en-3beta-ol + NADP(+). The enzyme catalyses 3-dehydro-4alpha-methylzymosterol + NADPH + H(+) = 4alpha-methylzymosterol + NADP(+). It catalyses the reaction zymosterone + NADPH + H(+) = zymosterol + NADP(+). It carries out the reaction 5alpha-cholest-8-en-3-one + NADPH + H(+) = 5alpha-cholest-8-en-3beta-ol + NADP(+). The catalysed reaction is 5alpha-androstane-3beta,17beta-diol + NADP(+) = 17beta-hydroxy-5alpha-androstan-3-one + NADPH + H(+). The enzyme catalyses 5alpha-androstane-3alpha,17beta-diol + NADP(+) = 17beta-hydroxy-5alpha-androstan-3-one + NADPH + H(+). It participates in steroid biosynthesis; estrogen biosynthesis. It functions in the pathway steroid biosynthesis; zymosterol biosynthesis; zymosterol from lanosterol: step 5/6. Bifunctional enzyme involved in steroid-hormone metabolism and cholesterol biosynthesis. Catalyzes the NADP(H)-dependent reduction of estrogens and androgens and regulates the biological potency of these steroids. Converts estrone (E1) to a more potent estrogen, 17beta-estradiol (E2). Converts dihydrotestosterone (DHT) to an inactive form. Also participates in the post-squalene cholesterol biosynthesis, as a 3-ketosteroid reductase. The chain is 3-keto-steroid reductase/17-beta-hydroxysteroid dehydrogenase 7 (Hsd17b7) from Rattus norvegicus (Rat).